The chain runs to 1174 residues: Tight junction protein 2 (1174 aa).

A PDZ 1 domain is found at 10 to 97; the sequence is TVTLQKDSKR…IAAIVVKRPR (88 aa). Residues serine 107, serine 127, serine 130, serine 140, serine 145, serine 147, serine 151, serine 173, serine 195, and serine 217 each carry the phosphoserine modification. Residues 125–137 are compositionally biased toward basic and acidic residues; that stretch reads GRSARSGYSERSR. The segment at 125–290 is disordered; that stretch reads GRSARSGYSE…AGQPDSDRPI (166 aa). The span at 146-214 shows a compositional bias: basic and acidic residues; that stretch reads RSWEDSPERG…DYGRPGERSH (69 aa). Basic and acidic residues predominate over residues 220-235; sequence RGYDRGYDRGYDRGYD. Position 239 is a phosphoserine (serine 239). Basic and acidic residues-rich tracts occupy residues 243-266 and 274-288; these read EYGR…EHLR and LRGR…DSDR. The PDZ 2 domain occupies 291–369; that stretch reads GVLLMKSKAN…KLQLVVLRDS (79 aa). 8 positions are modified to phosphoserine: serine 309, serine 382, serine 384, serine 390, serine 399, serine 408, serine 414, and serine 415. The tract at residues 391–430 is disordered; it reads EIESNRSFSPEERRQQYSDYDYHSSNEKLKERPNSREDMQ. Positions 399-430 are enriched in basic and acidic residues; it reads SPEERRQQYSDYDYHSSNEKLKERPNSREDMQ. Residue threonine 439 is modified to Phosphothreonine. Residues 456 to 490 are disordered; that stretch reads ENSKEPRYQEEPPAPQPKAAPRTFLRPSPEDEAIY. Serine 483 is subject to Phosphoserine. The PDZ 3 domain maps to 493-574; that stretch reads NTKMVRFKKG…GEMVTILAQS (82 aa). Tyrosine 558 carries the phosphotyrosine modification. In terms of domain architecture, SH3 spans 588 to 653; sequence GDSFFIRSHF…PNKSRAEQMA (66 aa). The region spanning 679 to 860 is the Guanylate kinase-like domain; that stretch reads MKKNLRKSRE…WFGSLKDTIQ (182 aa). 2 positions are modified to phosphoserine: serine 686 and serine 886. Position 889 is a phosphothreonine (threonine 889). A phosphoserine mark is found at serine 897 and serine 904. Disordered regions lie at residues 904–1065 and 1100–1174; these read SDFE…VLGK and DIYA…DTEL. Phosphothreonine is present on residues threonine 909 and threonine 917. Basic and acidic residues predominate over residues 940-951; that stretch reads VQHEESIRKPSP. 5 positions are modified to phosphoserine: serine 950, serine 962, serine 970, serine 990, and serine 1052. The segment covering 978–1000 has biased composition (basic and acidic residues); the sequence is EPPKAKTQNREESFDISRSHDYK. Residues 1044–1056 show a composition bias toward acidic residues; sequence ESEEVGEGSEEQE. At tyrosine 1102 the chain carries Phosphotyrosine. A phosphoserine mark is found at serine 1131 and serine 1143. Basic and acidic residues predominate over residues 1150-1159; that stretch reads YRQQLSEHSK. The interval 1172–1174 is interaction with SCRIB; it reads TEL.

It belongs to the MAGUK family. As to quaternary structure, homodimer. Interacts (via PDZ2 domain) with TJP1/ZO1 (via PDZ2 domain). Interacts with UBN1. Interacts with SCRIB. Interacts with OCLN. Interacts with SAFB in the nucleus. Interacts with USP53 (via the C-terminal region). Interacts with claudins, including CLDN1, CLDN2, CLDN3, CLDN5 and CLDN7. Interacts with CLDN18. Interacts (via N-terminus) with CTNNA1. Phosphorylated.

The protein localises to the cell junction. It is found in the adherens junction. It localises to the cell membrane. The protein resides in the nucleus. Its subcellular location is the tight junction. Plays a role in tight junctions and adherens junctions. Acts as a positive regulator of RANKL-induced osteoclast differentiation, potentially via mediating downstream transcriptional activity. The polypeptide is Tight junction protein 2 (Canis lupus familiaris (Dog)).